A 228-amino-acid polypeptide reads, in one-letter code: Phosphoenolpyruvate guanylyltransferase (228 aa).

Residues threonine 148, glycine 164, and serine 167 each coordinate phosphoenolpyruvate.

The protein belongs to the CofC family.

It catalyses the reaction phosphoenolpyruvate + GTP + H(+) = enolpyruvoyl-2-diphospho-5'-guanosine + diphosphate. It functions in the pathway cofactor biosynthesis; coenzyme F420 biosynthesis. Guanylyltransferase that catalyzes the activation of phosphoenolpyruvate (PEP) as enolpyruvoyl-2-diphospho-5'-guanosine, via the condensation of PEP with GTP. It is involved in the biosynthesis of coenzyme F420, a hydride carrier cofactor. The protein is Phosphoenolpyruvate guanylyltransferase of Thermomonospora curvata (strain ATCC 19995 / DSM 43183 / JCM 3096 / KCTC 9072 / NBRC 15933 / NCIMB 10081 / Henssen B9).